Here is a 171-residue protein sequence, read N- to C-terminus: Endoribonuclease YbeY (171 aa).

Zn(2+) contacts are provided by His126, His130, and His136.

The protein belongs to the endoribonuclease YbeY family. The cofactor is Zn(2+).

It is found in the cytoplasm. Functionally, single strand-specific metallo-endoribonuclease involved in late-stage 70S ribosome quality control and in maturation of the 3' terminus of the 16S rRNA. This chain is Endoribonuclease YbeY, found in Rhizobium etli (strain ATCC 51251 / DSM 11541 / JCM 21823 / NBRC 15573 / CFN 42).